A 422-amino-acid chain; its full sequence is Vitamin D3 receptor B (422 aa).

The segment at residues 20 to 95 (PRICGVCGDK…IGMMKEFILT (76 aa)) is a DNA-binding region (nuclear receptor). Zn(2+)-binding residues include C23, C26, C40, C43, C59, C65, C75, and C78. 2 NR C4-type zinc fingers span residues 23–43 (CGVCGDKATGFHFNAMTCEGC) and 59–78 (CPFNGSCTITKDNRRHCQAC). The segment at 96–125 (DEEVQRKKELIQRRKDEEAHREAQKPRLSD) is hinge. The disordered stretch occupies residues 106–128 (IQRRKDEEAHREAQKPRLSDEQR). The region spanning 126–418 (EQRNIIDTLV…LTPLVLEVFG (293 aa)) is the NR LBD domain. Y142 contributes to the calcitriol binding site. The segment at 145-190 (SYSDFSRFRPPVREGPVTRSASRAASLHSLSDASSDSFSHSPESGD) is disordered. The span at 163-185 (RSASRAASLHSLSDASSDSFSHS) shows a compositional bias: low complexity. S234 serves as a coordination point for calcitriol. The tract at residues 243 to 261 (KMIPGFRELTAEDQIALLK) is interaction with coactivator LXXLL motif. R271, S275, H302, and H392 together coordinate calcitriol. Residues 411–419 (PLVLEVFGG) carry the 9aaTAD motif.

This sequence belongs to the nuclear hormone receptor family. Homodimer in the absence of bound vitamin D3. Heterodimer with RXRA after vitamin D3 binding. Interacts with ncoa1 and possibly other coactivators, leading to a strong increase of transcription of target genes. In terms of tissue distribution, detected in embryo 24 to 48 hours after fertilization, and in intestinal bulb.

It is found in the nucleus. The protein resides in the cytoplasm. Functionally, nuclear receptor for calcitriol, the active form of vitamin D3 which mediates the action of this vitamin on cells. Enters the nucleus upon vitamin D3 binding where it forms heterodimers with the retinoid X receptor/RXR. The VDR-RXR heterodimers bind to specific response elements on DNA and activate the transcription of vitamin D3-responsive target genes. Recruited to promoters via its interaction with BAZ1B/WSTF which mediates the interaction with acetylated histones, an essential step for VDR-promoter association. Plays a central role in calcium homeostasis. In Danio rerio (Zebrafish), this protein is Vitamin D3 receptor B (vdrb).